The following is a 392-amino-acid chain: Formate-dependent phosphoribosylglycinamide formyltransferase (392 aa).

N(1)-(5-phospho-beta-D-ribosyl)glycinamide is bound by residues 22–23 (EL) and glutamate 82. Residues arginine 114, lysine 155, 160-165 (SSGKGQ), 195-198 (EGVV), and glutamate 203 each bind ATP. The ATP-grasp domain maps to 119–308 (RLAAEELQLP…EFALHVRAFL (190 aa)). 2 residues coordinate Mg(2+): glutamate 267 and glutamate 279. N(1)-(5-phospho-beta-D-ribosyl)glycinamide-binding positions include aspartate 286, lysine 355, and 362-363 (RR).

The protein belongs to the PurK/PurT family. Homodimer.

The enzyme catalyses N(1)-(5-phospho-beta-D-ribosyl)glycinamide + formate + ATP = N(2)-formyl-N(1)-(5-phospho-beta-D-ribosyl)glycinamide + ADP + phosphate + H(+). Its pathway is purine metabolism; IMP biosynthesis via de novo pathway; N(2)-formyl-N(1)-(5-phospho-D-ribosyl)glycinamide from N(1)-(5-phospho-D-ribosyl)glycinamide (formate route): step 1/1. In terms of biological role, involved in the de novo purine biosynthesis. Catalyzes the transfer of formate to 5-phospho-ribosyl-glycinamide (GAR), producing 5-phospho-ribosyl-N-formylglycinamide (FGAR). Formate is provided by PurU via hydrolysis of 10-formyl-tetrahydrofolate. The chain is Formate-dependent phosphoribosylglycinamide formyltransferase from Shigella boydii serotype 18 (strain CDC 3083-94 / BS512).